We begin with the raw amino-acid sequence, 138 residues long: Large ribosomal subunit protein bL19 (138 aa).

It belongs to the bacterial ribosomal protein bL19 family.

In terms of biological role, this protein is located at the 30S-50S ribosomal subunit interface and may play a role in the structure and function of the aminoacyl-tRNA binding site. In Rickettsia massiliae (strain Mtu5), this protein is Large ribosomal subunit protein bL19.